Consider the following 494-residue polypeptide: Cobyrinate a,c-diamide synthase (494 aa).

In terms of domain architecture, GATase cobBQ-type spans 270 to 475 (KIGVALDEAF…AHLHGVAYRE (206 aa)). C352 functions as the Nucleophile in the catalytic mechanism.

Belongs to the CobB/CbiA family. Requires Mg(2+) as cofactor.

The catalysed reaction is cob(II)yrinate + 2 L-glutamine + 2 ATP + 2 H2O = cob(II)yrinate a,c diamide + 2 L-glutamate + 2 ADP + 2 phosphate + 2 H(+). It catalyses the reaction Ni-sirohydrochlorin + 2 L-glutamine + 2 ATP + 2 H2O = Ni-sirohydrochlorin a,c-diamide + 2 L-glutamate + 2 ADP + 2 phosphate + 2 H(+). It participates in cofactor biosynthesis; adenosylcobalamin biosynthesis; cob(II)yrinate a,c-diamide from sirohydrochlorin (anaerobic route): step 10/10. Its function is as follows. Catalyzes the ATP-dependent amidation of the two carboxylate groups at positions a and c of cobyrinate, using either L-glutamine or ammonia as the nitrogen source (Potential). Involved in the biosynthesis of the unique nickel-containing tetrapyrrole coenzyme F430, the prosthetic group of methyl-coenzyme M reductase (MCR), which plays a key role in methanogenesis and anaerobic methane oxidation. Catalyzes the ATP-dependent amidation of the two carboxylate groups at positions a and c of Ni-sirohydrochlorin, using L-glutamine or ammonia as the nitrogen source. Also able to use sirohydrochlorin as substrate, but only produces a monoamide species in a much slower reaction. Unable to use other metallosirohydrochlorins such as sirohaem and Co-sirohydrochlorin. This is Cobyrinate a,c-diamide synthase from Methanosarcina barkeri (strain Fusaro / DSM 804).